A 376-amino-acid chain; its full sequence is Chorismate synthase (376 aa).

NADP(+)-binding residues include Arg39 and Arg45. Residues 115–117, Gly276, 291–295, and Arg317 each bind FMN; these read RSS and KPIPT.

The protein belongs to the chorismate synthase family. Homotetramer. Requires FMNH2 as cofactor.

It catalyses the reaction 5-O-(1-carboxyvinyl)-3-phosphoshikimate = chorismate + phosphate. It participates in metabolic intermediate biosynthesis; chorismate biosynthesis; chorismate from D-erythrose 4-phosphate and phosphoenolpyruvate: step 7/7. Its function is as follows. Catalyzes the anti-1,4-elimination of the C-3 phosphate and the C-6 proR hydrogen from 5-enolpyruvylshikimate-3-phosphate (EPSP) to yield chorismate, which is the branch point compound that serves as the starting substrate for the three terminal pathways of aromatic amino acid biosynthesis. This reaction introduces a second double bond into the aromatic ring system. The sequence is that of Chorismate synthase from Thermotoga sp. (strain RQ2).